Consider the following 184-residue polypeptide: MPVDAWVREEIEIPEGVEVSVQGNTVKVKGPKGEVERELFWPGVKIFVEGGKVVIYKDFPRRKDVAIVRTFKAHINNMIKGVTEGFTYKLKVVYSHFPITVKVQGDEVIIENFLGEKAPRRAKILPGVTVKVKGQEIIVEGIDKEAVGQTAANIEQATRITKWDRRVFQDGIYIVEKAGKPITF.

Belongs to the universal ribosomal protein uL6 family. As to quaternary structure, part of the 50S ribosomal subunit.

In terms of biological role, this protein binds to the 23S rRNA, and is important in its secondary structure. It is located near the subunit interface in the base of the L7/L12 stalk, and near the tRNA binding site of the peptidyltransferase center. The protein is Large ribosomal subunit protein uL6 of Pyrococcus abyssi (strain GE5 / Orsay).